The following is a 149-amino-acid chain: Secreted RxLR effector protein 47 (149 aa).

The N-terminal stretch at methionine 1–alanine 22 is a signal peptide. The short motif at arginine 57 to arginine 79 is the RxLR-dEER element.

The protein belongs to the RxLR effector family.

The protein localises to the secreted. Its subcellular location is the host membrane. Secreted effector that completely suppresses the host cell death induced by cell death-inducing proteins. This Plasmopara viticola (Downy mildew of grapevine) protein is Secreted RxLR effector protein 47.